A 404-amino-acid polypeptide reads, in one-letter code: Cysteine desulfurase IscS (404 aa).

Pyridoxal 5'-phosphate is bound by residues 75-76, N155, Q183, and 203-205; these read AT and SGH. Residue K206 is modified to N6-(pyridoxal phosphate)lysine. A pyridoxal 5'-phosphate-binding site is contributed by T243. The Cysteine persulfide intermediate role is filled by C328. C328 is a [2Fe-2S] cluster binding site.

This sequence belongs to the class-V pyridoxal-phosphate-dependent aminotransferase family. NifS/IscS subfamily. Homodimer. Forms a heterotetramer with IscU, interacts with other sulfur acceptors. Pyridoxal 5'-phosphate is required as a cofactor.

The protein resides in the cytoplasm. The catalysed reaction is (sulfur carrier)-H + L-cysteine = (sulfur carrier)-SH + L-alanine. Its pathway is cofactor biosynthesis; iron-sulfur cluster biosynthesis. In terms of biological role, master enzyme that delivers sulfur to a number of partners involved in Fe-S cluster assembly, tRNA modification or cofactor biosynthesis. Catalyzes the removal of elemental sulfur atoms from cysteine to produce alanine. Functions as a sulfur delivery protein for Fe-S cluster synthesis onto IscU, an Fe-S scaffold assembly protein, as well as other S acceptor proteins. In Serratia proteamaculans (strain 568), this protein is Cysteine desulfurase IscS.